Reading from the N-terminus, the 261-residue chain is Kallikrein-1 (261 aa).

The signal sequence occupies residues 1–18 (MWFLILFLALSLGRNDAA). A propeptide spans 19–24 (PPVQSR) (activation peptide). One can recognise a Peptidase S1 domain in the interval 25–258 (VVGGYNCEMN…FTPWIKEVMK (234 aa)). Intrachain disulfides connect cysteine 31–cysteine 173, cysteine 50–cysteine 66, cysteine 152–cysteine 219, cysteine 184–cysteine 198, and cysteine 209–cysteine 234. Histidine 65 acts as the Charge relay system in catalysis. A glycan (N-linked (GlcNAc...) asparagine) is linked at asparagine 108. Aspartate 120 acts as the Charge relay system in catalysis. Serine 213 functions as the Charge relay system in the catalytic mechanism.

The protein belongs to the peptidase S1 family. Kallikrein subfamily. As to expression, high levels in pancreas, submaxillary and parotid glands, spleen, and kidney.

It carries out the reaction Preferential cleavage of Arg-|-Xaa bonds in small molecule substrates. Highly selective action to release kallidin (lysyl-bradykinin) from kininogen involves hydrolysis of Met-|-Xaa or Leu-|-Xaa.. This Rattus norvegicus (Rat) protein is Kallikrein-1 (Ngfg).